A 325-amino-acid polypeptide reads, in one-letter code: Capsid protein (325 aa).

The segment at 30–89 (DLRTNPPPTEPPSRKSKLMSTSENKGKQPLHPPPTEGFPKPPPPPSSTPTTPTPPDQTKA) is disordered. The segment covering 59 to 84 (LHPPPTEGFPKPPPPPSSTPTTPTPP) has biased composition (pro residues).

It belongs to the potexviruses coat protein family.

Its subcellular location is the virion. Required for genome encapsidation. Forms ribonucleoprotein complexes along with TGB1 helicase and viral RNA. This Citrus (ICRSV) protein is Capsid protein.